Consider the following 580-residue polypeptide: MDKSTLKQLIDQAAGRKPADTIIKNAKIVDVYNARIIEGTLAIADSRFLGIDAAYTADNVINAHGQYVVPGLIDPHIHIESANVSPAVFGSLVTPHGTTTILADPHEIVNVAGMRGLEYMVASAKNTALDIKYTMPSCVPAANPTLETSGAVITADEIKQSYDQGLTYGLAEFMNYPGVVNADDGVLDELLVSLNARKMIDGHSPALHGQGLNAYAAAGVHNDHECTQVDEMLDRISRGMYVYLRYGTVSKNMPTLLKGVTPQNARFCCLCGDDLQSVTLRETGHLDESIRVAIQNGIDPLTAIQMATINTAQCTGLSDRGGIAPGLKADFLLVDDLEHFNVNQTFIDGQKIAANGAYLLPTDDSVAGFDDLLETVHLDNFSADQLKLNLTSDKAHVIGLQSISRTQNLVLPVAHDAEGDFHYKPSEDIVKVAVVERHHLTGNVGVGLLSGFGLQNGAIATSIGHDSHNLVVVGTNDADMVVAIDALKACQGGGVAVQNGQVIATLPFVIGGLMSTEPIDSLIAHQKAFNTICHEQLNVTAQFDPIMKLGAMPLDVIPNLRITDKGLVDVTKFEIIDINA.

This sequence belongs to the metallo-dependent hydrolases superfamily. Adenine deaminase family. Mn(2+) serves as cofactor.

It carries out the reaction adenine + H2O + H(+) = hypoxanthine + NH4(+). The chain is Adenine deaminase 2 from Latilactobacillus sakei subsp. sakei (strain 23K) (Lactobacillus sakei subsp. sakei).